Reading from the N-terminus, the 510-residue chain is NAD(P)H-quinone oxidoreductase subunit 2 B, chloroplastic (510 aa).

A run of 13 helical transmembrane segments spans residues 24 to 44 (LLLFHGSFIFPECILIFGLIL), 57 to 77 (IPWLYFISSTSLVMSITALLF), 99 to 119 (IFQFLILLCSTLCIPLSVEYI), 124 to 144 (MAITEFLLFVLTATLGGMFLC), 150 to 170 (ITIFVAPECFSLCSYLLSGYT), 183 to 203 (YLLMGGASSSILVHGFSWLYG), 227 to 247 (PGISIALIFITVGIGFKLSPA), 295 to 315 (WHLLLEILAILSMILGNLIAI), 323 to 343 (MLAYSSIGQIGYVIIGIIVGD), 347 to 367 (GYASMITYMLFYISMNLGTFA), 395 to 415 (ALSSALCLLSLGGLPPLAGFF), 418 to 438 (LHLFWCGWQAGLYFLVSIGLL), and 484 to 504 (MIVCVIASTIPGISMNPIIAI).

It belongs to the complex I subunit 2 family. As to quaternary structure, NDH is composed of at least 16 different subunits, 5 of which are encoded in the nucleus.

It is found in the plastid. The protein resides in the chloroplast thylakoid membrane. The catalysed reaction is a plastoquinone + NADH + (n+1) H(+)(in) = a plastoquinol + NAD(+) + n H(+)(out). The enzyme catalyses a plastoquinone + NADPH + (n+1) H(+)(in) = a plastoquinol + NADP(+) + n H(+)(out). NDH shuttles electrons from NAD(P)H:plastoquinone, via FMN and iron-sulfur (Fe-S) centers, to quinones in the photosynthetic chain and possibly in a chloroplast respiratory chain. The immediate electron acceptor for the enzyme in this species is believed to be plastoquinone. Couples the redox reaction to proton translocation, and thus conserves the redox energy in a proton gradient. The polypeptide is NAD(P)H-quinone oxidoreductase subunit 2 B, chloroplastic (Liriodendron tulipifera (Tuliptree)).